Reading from the N-terminus, the 1159-residue chain is Protocadherin-17 (1159 aa).

The signal sequence occupies residues 1-17 (MYLSICCCFLLWAPALT). Cadherin domains follow at residues 18-132 (LKNL…APSF), 133-243 (SSDQ…SPVF), 244-351 (EAPS…APSI), 353-472 (FVSV…PPRF), 473-583 (TKGL…APVI), and 589-695 (QNDT…VPRV). Residues 18 to 707 (LKNLNYSVPE…EQHHWDMSLP (690 aa)) lie on the Extracellular side of the membrane. N-linked (GlcNAc...) asparagine glycosylation occurs at Asn22. The short motif at 186–188 (RGD) is the Cell attachment site element. N-linked (GlcNAc...) asparagine glycans are attached at residues Asn266, Asn439, Asn453, Asn504, Asn566, and Asn590. Residues 708 to 728 (LIVTLSTISIILLAAMITIAV) form a helical membrane-spanning segment. The Cytoplasmic segment spans residues 729–1159 (KCKRENKEIR…RGNDPVAVRK (431 aa)). Disordered stretches follow at residues 858 to 909 (NFPA…KGSC) and 1108 to 1132 (SRDSSEMGAVLEQLDHPNRDLGRES). The segment covering 867 to 879 (GSRQQFVQSSSTF) has biased composition (polar residues). Basic and acidic residues-rich tracts occupy residues 880 to 895 (KDPERASLRDSGHGDS) and 1120 to 1132 (QLDHPNRDLGRES).

The protein localises to the cell membrane. Its function is as follows. Potential calcium-dependent cell-adhesion protein. The sequence is that of Protocadherin-17 (PCDH17) from Homo sapiens (Human).